The following is a 431-amino-acid chain: Adenylosuccinate synthetase (431 aa).

Residues 12–18 (GDEGKGK) and 40–42 (GHT) each bind GTP. Aspartate 13 (proton acceptor) is an active-site residue. 2 residues coordinate Mg(2+): aspartate 13 and glycine 40. Residues 13-16 (DEGK), 38-41 (NAGH), threonine 131, arginine 145, glutamine 225, threonine 240, and arginine 304 each bind IMP. Histidine 41 serves as the catalytic Proton donor. Substrate is bound at residue 300–306 (VNTGRPR). GTP is bound by residues arginine 306, 332–334 (KLD), and 414–416 (STS).

This sequence belongs to the adenylosuccinate synthetase family. As to quaternary structure, homodimer. Mg(2+) is required as a cofactor.

The protein resides in the cytoplasm. The enzyme catalyses IMP + L-aspartate + GTP = N(6)-(1,2-dicarboxyethyl)-AMP + GDP + phosphate + 2 H(+). The protein operates within purine metabolism; AMP biosynthesis via de novo pathway; AMP from IMP: step 1/2. In terms of biological role, plays an important role in the de novo pathway of purine nucleotide biosynthesis. Catalyzes the first committed step in the biosynthesis of AMP from IMP. The sequence is that of Adenylosuccinate synthetase from Rhizobium rhizogenes (strain K84 / ATCC BAA-868) (Agrobacterium radiobacter).